The following is a 595-amino-acid chain: Chaperone protein HscA homolog (595 aa).

It belongs to the heat shock protein 70 family.

Functionally, chaperone involved in the maturation of iron-sulfur cluster-containing proteins. Has a low intrinsic ATPase activity which is markedly stimulated by HscB. This is Chaperone protein HscA homolog from Rickettsia peacockii (strain Rustic).